Reading from the N-terminus, the 249-residue chain is MKFADAMQCIGKESLCFHPELNVFVNYPVLIGCHIGYLVVIVLLYKFMKGRTAYVLKYPMMLYNTAQVALSLVMAINLGQFLVYGVFNLNGGFTGTIEYWIFVHYATKFLDMFDTYFIVLRKKEEQLSFLHIYHHVTIGFIWGLLLHHGVANGTAFFGAWINSAVHALMYFHYLYTSLGYTNPLKTYLTQLQMIQFALCILHAVLAVVAHSPIPKKWAVLQLCYHLTLLYLFMRFYRKGMRKLKRKAKV.

3 helical membrane-spanning segments follow: residues 23 to 43 (VFVNYPVLIGCHIGYLVVIVL), 68 to 88 (VALSLVMAINLGQFLVYGVFN), and 100 to 120 (WIFVHYATKFLDMFDTYFIVL). Residues 131–135 (HIYHH) carry the HxxHH motif motif. The active-site Nucleophile is His134. A run of 4 helical transmembrane segments spans residues 138–158 (IGFIWGLLLHHGVANGTAFFG), 159–179 (AWINSAVHALMYFHYLYTSLG), 193–213 (MIQFALCILHAVLAVVAHSPI), and 217–236 (WAVLQLCYHLTLLYLFMRFY).

Belongs to the ELO family.

Its subcellular location is the membrane. It catalyses the reaction an acyl-CoA + malonyl-CoA + H(+) = a 3-oxoacyl-CoA + CO2 + CoA. The protein operates within lipid metabolism; polyunsaturated fatty acid biosynthesis. Functionally, involved in the synthesis of fatty acids. Elongates C20 polyunsaturated fatty acids (PUFAs) with a preference for n-6 PUFAs. This Leishmania major protein is Fatty acid elongase 5.